Reading from the N-terminus, the 264-residue chain is Small ribosomal subunit protein uS3 (264 aa).

A KH type-2 domain is found at 39 to 107; it reads VREYLKKKLK…PVHVNIEEIR (69 aa). The segment at 214–264 is disordered; it reads PVETAAPREEERRPRRAPRGDRPDGARNGRPGGGRGRAPRKADAAPAPEGE. A compositionally biased stretch (basic and acidic residues) spans 219 to 240; sequence APREEERRPRRAPRGDRPDGAR.

It belongs to the universal ribosomal protein uS3 family. As to quaternary structure, part of the 30S ribosomal subunit. Forms a tight complex with proteins S10 and S14.

Functionally, binds the lower part of the 30S subunit head. Binds mRNA in the 70S ribosome, positioning it for translation. This chain is Small ribosomal subunit protein uS3, found in Bordetella avium (strain 197N).